We begin with the raw amino-acid sequence, 288 residues long: Bifunctional protein MdtA (288 aa).

Residues 129 to 132 (TGPV), 152 to 156 (RKLDK), 195 to 198 (TAGA), and K256 each bind NADP(+).

As to quaternary structure, homotrimer.

Its subcellular location is the cytoplasm. The catalysed reaction is 5,10-methylenetetrahydromethanopterin + NADP(+) = 5,10-methenyl-5,6,7,8-tetrahydromethanopterin + NADPH. It catalyses the reaction (6R)-5,10-methylene-5,6,7,8-tetrahydrofolate + NADP(+) = (6R)-5,10-methenyltetrahydrofolate + NADPH. It functions in the pathway one-carbon metabolism; formaldehyde degradation; formate from formaldehyde (H(4)MPT route): step 2/5. Functionally, catalyzes the dehydrogenation of methylene-H(4)MPT. Can also catalyze the reversible dehydrogenation of methylene-H(4)F with 20-fold lower catalytic efficiency. In Methylorubrum extorquens (strain ATCC 14718 / DSM 1338 / JCM 2805 / NCIMB 9133 / AM1) (Methylobacterium extorquens), this protein is Bifunctional protein MdtA.